Reading from the N-terminus, the 297-residue chain is Homoserine kinase (297 aa).

Position 82–92 (82–92 (PLTRGLGSSAS)) interacts with ATP.

Belongs to the GHMP kinase family. Homoserine kinase subfamily.

Its subcellular location is the cytoplasm. The enzyme catalyses L-homoserine + ATP = O-phospho-L-homoserine + ADP + H(+). It participates in amino-acid biosynthesis; L-threonine biosynthesis; L-threonine from L-aspartate: step 4/5. Catalyzes the ATP-dependent phosphorylation of L-homoserine to L-homoserine phosphate. The protein is Homoserine kinase of Bacillus cereus (strain G9842).